The primary structure comprises 254 residues: 3-deoxy-manno-octulosonate cytidylyltransferase (254 aa).

It belongs to the KdsB family.

It localises to the cytoplasm. It catalyses the reaction 3-deoxy-alpha-D-manno-oct-2-ulosonate + CTP = CMP-3-deoxy-beta-D-manno-octulosonate + diphosphate. Its pathway is nucleotide-sugar biosynthesis; CMP-3-deoxy-D-manno-octulosonate biosynthesis; CMP-3-deoxy-D-manno-octulosonate from 3-deoxy-D-manno-octulosonate and CTP: step 1/1. The protein operates within bacterial outer membrane biogenesis; lipopolysaccharide biosynthesis. In terms of biological role, activates KDO (a required 8-carbon sugar) for incorporation into bacterial lipopolysaccharide in Gram-negative bacteria. The chain is 3-deoxy-manno-octulosonate cytidylyltransferase from Bordetella petrii (strain ATCC BAA-461 / DSM 12804 / CCUG 43448).